The chain runs to 415 residues: Acetylornithine aminotransferase (415 aa).

Pyridoxal 5'-phosphate is bound by residues 115–116 (GA) and F148. R151 provides a ligand contact to N(2)-acetyl-L-ornithine. 239-242 (DEVQ) contributes to the pyridoxal 5'-phosphate binding site. K268 carries the N6-(pyridoxal phosphate)lysine modification. S295 provides a ligand contact to N(2)-acetyl-L-ornithine. Position 296 (T296) interacts with pyridoxal 5'-phosphate.

The protein belongs to the class-III pyridoxal-phosphate-dependent aminotransferase family. ArgD subfamily. As to quaternary structure, homodimer. The cofactor is pyridoxal 5'-phosphate.

It localises to the cytoplasm. The enzyme catalyses N(2)-acetyl-L-ornithine + 2-oxoglutarate = N-acetyl-L-glutamate 5-semialdehyde + L-glutamate. Its pathway is amino-acid biosynthesis; L-arginine biosynthesis; N(2)-acetyl-L-ornithine from L-glutamate: step 4/4. The protein is Acetylornithine aminotransferase of Prochlorococcus marinus subsp. pastoris (strain CCMP1986 / NIES-2087 / MED4).